The primary structure comprises 249 residues: Indole-3-glycerol phosphate synthase (249 aa).

This sequence belongs to the TrpC family.

The catalysed reaction is 1-(2-carboxyphenylamino)-1-deoxy-D-ribulose 5-phosphate + H(+) = (1S,2R)-1-C-(indol-3-yl)glycerol 3-phosphate + CO2 + H2O. Its pathway is amino-acid biosynthesis; L-tryptophan biosynthesis; L-tryptophan from chorismate: step 4/5. The sequence is that of Indole-3-glycerol phosphate synthase from Pyrobaculum aerophilum (strain ATCC 51768 / DSM 7523 / JCM 9630 / CIP 104966 / NBRC 100827 / IM2).